Reading from the N-terminus, the 214-residue chain is Germin-like protein 9-3 (214 aa).

An N-terminal signal peptide occupies residues 1 to 23 (MASSILLLVVLAVVSAPVALVMA). N-linked (GlcNAc...) asparagine glycosylation is found at asparagine 42, asparagine 60, and asparagine 69. Positions 59–202 (MNMSMPMPNA…SFKTDVPTIQ (144 aa)) constitute a Cupin type-1 domain. Mn(2+) is bound by residues histidine 104, histidine 106, glutamate 111, and histidine 150.

It belongs to the germin family. As to quaternary structure, oligomer (believed to be a pentamer but probably hexamer).

It is found in the secreted. Its subcellular location is the extracellular space. The protein localises to the apoplast. Functionally, may play a role in plant defense. Probably has no oxalate oxidase activity even if the active site is conserved. The sequence is that of Germin-like protein 9-3 from Oryza sativa subsp. japonica (Rice).